Reading from the N-terminus, the 463-residue chain is Cysteine--tRNA ligase (463 aa).

A Zn(2+)-binding site is contributed by C29. Residues 31-41 (PTVYDFAHIGN) carry the 'HIGH' region motif. Zn(2+)-binding residues include C227, H252, and E256. Residues 285-289 (KMSKS) carry the 'KMSKS' region motif. Residue K288 participates in ATP binding.

Belongs to the class-I aminoacyl-tRNA synthetase family. Monomer. It depends on Zn(2+) as a cofactor.

The protein resides in the cytoplasm. The enzyme catalyses tRNA(Cys) + L-cysteine + ATP = L-cysteinyl-tRNA(Cys) + AMP + diphosphate. This chain is Cysteine--tRNA ligase, found in Rhodopseudomonas palustris (strain BisB5).